The sequence spans 206 residues: Peptidyl-tRNA hydrolase (206 aa).

Tyr-14 is a binding site for tRNA. The active-site Proton acceptor is the His-19. Positions 64, 66, and 112 each coordinate tRNA.

Belongs to the PTH family. As to quaternary structure, monomer.

It is found in the cytoplasm. The catalysed reaction is an N-acyl-L-alpha-aminoacyl-tRNA + H2O = an N-acyl-L-amino acid + a tRNA + H(+). Functionally, hydrolyzes ribosome-free peptidyl-tRNAs (with 1 or more amino acids incorporated), which drop off the ribosome during protein synthesis, or as a result of ribosome stalling. Catalyzes the release of premature peptidyl moieties from peptidyl-tRNA molecules trapped in stalled 50S ribosomal subunits, and thus maintains levels of free tRNAs and 50S ribosomes. In Rhodopseudomonas palustris (strain ATCC BAA-98 / CGA009), this protein is Peptidyl-tRNA hydrolase.